The chain runs to 161 residues: Type-1 angiotensin II receptor-associated protein (161 aa).

Residues 1 to 26 (MELPAVNLKVILLVHWLLTTWGCLVF) lie on the Extracellular side of the membrane. Residues 27–47 (SSSYAWGNFTILALGVWAVAQ) form a helical membrane-spanning segment. The Cytoplasmic segment spans residues 48 to 53 (RDSIDA). A helical membrane pass occupies residues 54 to 74 (IGMFLGGLVATIFLDIIYISI). Residues 75–86 (FYSSVATGDTGR) are Extracellular-facing. A helical membrane pass occupies residues 87–107 (FGAGMAILSLLLKPFSCCLVY). Over 108-161 (HMHRERGGELPLRPDFFGPSQEHSAYQTIDSSSDAAADPFASLENKGQAVPRGY) the chain is Cytoplasmic. Positions 110–122 (HRERGGELPLRPD) are interaction with AGTR1. A Phosphoserine modification is found at Ser-127. Thr-135 carries the post-translational modification Phosphothreonine. At Ser-138 the chain carries Phosphoserine.

Interacts with RACK1, and with the C-terminal region of AGTR1. In terms of tissue distribution, ubiquitous but more abundant in kidney, testis and heart.

It localises to the endoplasmic reticulum membrane. It is found in the golgi apparatus membrane. Its subcellular location is the cytoplasmic vesicle membrane. Functionally, appears to be a negative regulator of type-1 angiotensin II receptor-mediated signaling by regulating receptor internalization as well as mechanism of receptor desensitization such as phosphorylation. Also induces a decrease in angiotensin II-stimulated transcriptional activity. May play a role of negative regulator in cardiomyocyte hypertrophy induced by angiotensin II through an inhibition of p38 mitogen-activated protein kinase pathway. This is Type-1 angiotensin II receptor-associated protein (Agtrap) from Mus musculus (Mouse).